Here is a 980-residue protein sequence, read N- to C-terminus: Serine/threonine-protein phosphatase 4 regulatory subunit 3 (980 aa).

Residues 1–105 (MTTDTRRRVK…EKICQVQGKD (105 aa)) form the WH1 domain. Disordered stretches follow at residues 640–668 (RDKM…RQME), 695–861 (VSEK…SLCD), and 885–980 (VTAA…ARQA). Polar residues predominate over residues 695–708 (VSEKNGPQTQNQQK). Composition is skewed to low complexity over residues 709 to 749 (SSPP…SSSP), 757 to 789 (QTQA…QQTQ), 803 to 859 (EAPQ…AASL), and 885 to 926 (VTAA…SPAS). Residues 929–939 (QDANSTEGTSS) are compositionally biased toward polar residues. Residues 940 to 951 (EADKTTAKKGLV) show a composition bias toward basic and acidic residues. Positions 953-968 (YESDSGEDDYEEDEYS) are enriched in acidic residues.

The protein belongs to the SMEK family. In terms of assembly, serine/threonine-protein phosphatase 4 (PP4) occurs in different assemblies of the catalytic and one or more regulatory subunits. Probably part of a PP4 PPP4C-PPP4R2-PPP4R3 complex containing Pp4-19C, PPP4R2r and flfl. Interacts with mira. As to expression, expressed in neuroblasts.

Its subcellular location is the nucleus. It is found in the membrane. The protein localises to the cytoplasm. In terms of biological role, regulatory subunit of serine/threonine-protein phosphatase 4. The probable PP4 complex Pp4-19C-PPP4R2r-flfl (PPP4C-PPP4R2-PPP4R3) is required to prevent caspase induced cell death (in vitro). May be involved in DNA damage repair. Key mediator specific for the localization of mira and associated cell fate determinants during both interphase and mitosis. Nuclear Flfl is required to exclude mira/pros from the nucleus when inefficiently bound to the cytoskeleton/cortex, whereas cytosolic or membrane-associated flfl is required for the cortical association and asymmetric localization of mira/pros/brat/stau at metaphase and anaphase. This chain is Serine/threonine-protein phosphatase 4 regulatory subunit 3 (flfl), found in Drosophila melanogaster (Fruit fly).